Here is a 140-residue protein sequence, read N- to C-terminus: MANSASGMHVNDECKIKFLELKAKRTYRFIVFKIDEKAQQVQIEKLGNPEETYDDFTSSIPDDECRYAVYDFDFTTEDNCQKSKIFFIAWSPDTSRVRSKMLYASSKDRFKREMEGIQVELQATDPSEMSLDIIKGRLNL.

Ser-6 carries the phosphoserine modification. The ADF-H domain maps to Gly-7 to Asn-139.

It belongs to the actin-binding proteins ADF family. Expressed in the root trichoblast cells and developed root hairs.

It localises to the cytoplasm. The protein localises to the cytoskeleton. In terms of biological role, actin-depolymerizing protein. Severs actin filaments (F-actin) and binds to actin monomers. In Arabidopsis thaliana (Mouse-ear cress), this protein is Actin-depolymerizing factor 8 (ADF8).